Consider the following 142-residue polypeptide: Type 3 secretion system pilotin (142 aa).

The first 23 residues, 1–23 (MIRHGSNKLKIFILSILLLTLSG), serve as a signal peptide directing secretion. The N-palmitoyl cysteine moiety is linked to residue Cys-24. The S-diacylglycerol cysteine moiety is linked to residue Cys-24.

It belongs to the MxiM family. As to quaternary structure, monomer. Interacts with the secretin MxiD/SctC.

It localises to the cell outer membrane. Functionally, involved in the synthesis of the type III secretion system (T3SS), also called injectisome, which is used to inject bacterial effector proteins into eukaryotic host cells. Pilot protein that is required for the proper localization of the secretin MxiD/SctC in the outer membrane. Also influences both MxiD/SctC multimerization and stability. Required for both Ipa translocation and tissue culture cell invasion. Binds lipids. The protein is Type 3 secretion system pilotin of Shigella flexneri.